We begin with the raw amino-acid sequence, 275 residues long: Dermonecrotic toxin SpaSicTox-betaIIA3 (275 aa).

The active site involves H5. Mg(2+) is bound by residues E25 and D27. The active-site Nucleophile is the H41. 2 cysteine pairs are disulfide-bonded: C45-C51 and C47-C190. Residue D85 coordinates Mg(2+).

It belongs to the arthropod phospholipase D family. Class II subfamily. Mg(2+) serves as cofactor. Expressed by the venom gland.

It is found in the secreted. It catalyses the reaction an N-(acyl)-sphingosylphosphocholine = an N-(acyl)-sphingosyl-1,3-cyclic phosphate + choline. The catalysed reaction is an N-(acyl)-sphingosylphosphoethanolamine = an N-(acyl)-sphingosyl-1,3-cyclic phosphate + ethanolamine. It carries out the reaction a 1-acyl-sn-glycero-3-phosphocholine = a 1-acyl-sn-glycero-2,3-cyclic phosphate + choline. The enzyme catalyses a 1-acyl-sn-glycero-3-phosphoethanolamine = a 1-acyl-sn-glycero-2,3-cyclic phosphate + ethanolamine. In terms of biological role, dermonecrotic toxins cleave the phosphodiester linkage between the phosphate and headgroup of certain phospholipids (sphingolipid and lysolipid substrates), forming an alcohol (often choline) and a cyclic phosphate. This toxin acts on sphingomyelin (SM). It may also act on ceramide phosphoethanolamine (CPE), lysophosphatidylcholine (LPC) and lysophosphatidylethanolamine (LPE), but not on lysophosphatidylserine (LPS), and lysophosphatidylglycerol (LPG). It acts by transphosphatidylation, releasing exclusively cyclic phosphate products as second products. Induces dermonecrosis, hemolysis, increased vascular permeability, edema, inflammatory response, and platelet aggregation. The polypeptide is Dermonecrotic toxin SpaSicTox-betaIIA3 (Sicarius patagonicus (Six-eyed sand spider)).